A 113-amino-acid chain; its full sequence is Large ribosomal subunit protein uL22 (113 aa).

It belongs to the universal ribosomal protein uL22 family. Part of the 50S ribosomal subunit.

Functionally, this protein binds specifically to 23S rRNA; its binding is stimulated by other ribosomal proteins, e.g. L4, L17, and L20. It is important during the early stages of 50S assembly. It makes multiple contacts with different domains of the 23S rRNA in the assembled 50S subunit and ribosome. The globular domain of the protein is located near the polypeptide exit tunnel on the outside of the subunit, while an extended beta-hairpin is found that lines the wall of the exit tunnel in the center of the 70S ribosome. The protein is Large ribosomal subunit protein uL22 of Bacillus cytotoxicus (strain DSM 22905 / CIP 110041 / 391-98 / NVH 391-98).